A 518-amino-acid chain; its full sequence is U3 small nucleolar RNA-associated protein 15 homolog (518 aa).

Alanine 2 bears the N-acetylalanine mark. WD repeat units lie at residues lysine 36–threonine 75, arginine 78–glutamine 117, glycine 120–threonine 159, glutamate 162–serine 202, glutamate 204–valine 242, asparagine 246–serine 285, and aspartate 287–serine 326. A Glycyl lysine isopeptide (Lys-Gly) (interchain with G-Cter in SUMO2) cross-link involves residue lysine 249.

In terms of assembly, part of the small subunit (SSU) processome, composed of more than 70 proteins and the RNA chaperone small nucleolar RNA (snoRNA) U3. May be a component of the proposed t-UTP subcomplex of the ribosomal small subunit (SSU) processome containing at least UTP4, WDR43, HEATR1, UTP15, WDR75. Interacts directly with UTP4 and WDR43.

The protein resides in the nucleus. Its subcellular location is the nucleolus. Its function is as follows. Ribosome biogenesis factor. Involved in nucleolar processing of pre-18S ribosomal RNA. Required for optimal pre-ribosomal RNA transcription by RNA polymerase I. Part of the small subunit (SSU) processome, first precursor of the small eukaryotic ribosomal subunit. During the assembly of the SSU processome in the nucleolus, many ribosome biogenesis factors, an RNA chaperone and ribosomal proteins associate with the nascent pre-rRNA and work in concert to generate RNA folding, modifications, rearrangements and cleavage as well as targeted degradation of pre-ribosomal RNA by the RNA exosome. The chain is U3 small nucleolar RNA-associated protein 15 homolog from Homo sapiens (Human).